The primary structure comprises 224 residues: Phosphoribosylformylglycinamidine synthase subunit PurQ (224 aa).

One can recognise a Glutamine amidotransferase type-1 domain in the interval Thr-2 to Ala-224. Cys-85 acts as the Nucleophile in catalysis. Active-site residues include His-202 and Glu-204.

As to quaternary structure, part of the FGAM synthase complex composed of 1 PurL, 1 PurQ and 2 PurS subunits.

Its subcellular location is the cytoplasm. It catalyses the reaction N(2)-formyl-N(1)-(5-phospho-beta-D-ribosyl)glycinamide + L-glutamine + ATP + H2O = 2-formamido-N(1)-(5-O-phospho-beta-D-ribosyl)acetamidine + L-glutamate + ADP + phosphate + H(+). The catalysed reaction is L-glutamine + H2O = L-glutamate + NH4(+). The protein operates within purine metabolism; IMP biosynthesis via de novo pathway; 5-amino-1-(5-phospho-D-ribosyl)imidazole from N(2)-formyl-N(1)-(5-phospho-D-ribosyl)glycinamide: step 1/2. Its function is as follows. Part of the phosphoribosylformylglycinamidine synthase complex involved in the purines biosynthetic pathway. Catalyzes the ATP-dependent conversion of formylglycinamide ribonucleotide (FGAR) and glutamine to yield formylglycinamidine ribonucleotide (FGAM) and glutamate. The FGAM synthase complex is composed of three subunits. PurQ produces an ammonia molecule by converting glutamine to glutamate. PurL transfers the ammonia molecule to FGAR to form FGAM in an ATP-dependent manner. PurS interacts with PurQ and PurL and is thought to assist in the transfer of the ammonia molecule from PurQ to PurL. This Halobacterium salinarum (strain ATCC 700922 / JCM 11081 / NRC-1) (Halobacterium halobium) protein is Phosphoribosylformylglycinamidine synthase subunit PurQ.